A 527-amino-acid polypeptide reads, in one-letter code: Protein IQ-DOMAIN 4 (527 aa).

The segment at 13–90 (CLSPGKDKKN…PPSPPPPPPA (78 aa)) is disordered. Basic and acidic residues predominate over residues 17-26 (GKDKKNQKPE). Residues 63–90 (PYPPPPPLPDFAPQPLLPPPSPPPPPPA) show a composition bias toward pro residues. Residues 147–175 (EETAAIKIQNAYRCYTARRTLRALRGMAR) enclose the IQ domain. Residues 256–273 (RSVNRKEASVRRERALAY) are calmodulin-binding. The disordered stretch occupies residues 323 to 527 (VSVKSSLKRE…EKKRRNGGSS (205 aa)). The segment covering 335 to 360 (IKSSPARSKTQKSASQSSIQWPVNND) has biased composition (polar residues). Basic and acidic residues predominate over residues 361 to 370 (TKSRKIEVTN). Polar residues-rich tracts occupy residues 399–422 (LDNT…NAQT) and 437–455 (NTKT…NLAN). Over residues 471-481 (PKKEVVADKKK) the composition is skewed to basic and acidic residues. The Nuclear localization signal signature appears at 478 to 485 (DKKKPPQM).

Belongs to the IQD family. As to quaternary structure, binds to multiple calmodulin (CaM) in the presence of Ca(2+) and CaM-like proteins.

It localises to the nucleus. The protein resides in the nucleolus. In terms of biological role, may be involved in cooperative interactions with calmodulins or calmodulin-like proteins. Recruits calmodulin proteins to microtubules, thus being a potential scaffold in cellular signaling and trafficking. May associate with nucleic acids and regulate gene expression at the transcriptional or post-transcriptional level. This chain is Protein IQ-DOMAIN 4, found in Arabidopsis thaliana (Mouse-ear cress).